The chain runs to 272 residues: Dermonecrotic toxin LvSicTox-alphaIC1bi (272 aa).

Residue His-5 is part of the active site. Residues Glu-25 and Asp-27 each coordinate Mg(2+). His-41 functions as the Nucleophile in the catalytic mechanism. Disulfide bonds link Cys-45–Cys-51 and Cys-47–Cys-189. Asp-84 is a binding site for Mg(2+).

Belongs to the arthropod phospholipase D family. Class II subfamily. It depends on Mg(2+) as a cofactor. As to expression, expressed by the venom gland.

The protein localises to the secreted. The enzyme catalyses an N-(acyl)-sphingosylphosphocholine = an N-(acyl)-sphingosyl-1,3-cyclic phosphate + choline. It catalyses the reaction an N-(acyl)-sphingosylphosphoethanolamine = an N-(acyl)-sphingosyl-1,3-cyclic phosphate + ethanolamine. It carries out the reaction a 1-acyl-sn-glycero-3-phosphocholine = a 1-acyl-sn-glycero-2,3-cyclic phosphate + choline. The catalysed reaction is a 1-acyl-sn-glycero-3-phosphoethanolamine = a 1-acyl-sn-glycero-2,3-cyclic phosphate + ethanolamine. Its function is as follows. Dermonecrotic toxins cleave the phosphodiester linkage between the phosphate and headgroup of certain phospholipids (sphingolipid and lysolipid substrates), forming an alcohol (often choline) and a cyclic phosphate. This toxin acts on sphingomyelin (SM). It may also act on ceramide phosphoethanolamine (CPE), lysophosphatidylcholine (LPC) and lysophosphatidylethanolamine (LPE), but not on lysophosphatidylserine (LPS), and lysophosphatidylglycerol (LPG). It acts by transphosphatidylation, releasing exclusively cyclic phosphate products as second products. Induces dermonecrosis, hemolysis, increased vascular permeability, edema, inflammatory response, and platelet aggregation. In Loxosceles variegata (Recluse spider), this protein is Dermonecrotic toxin LvSicTox-alphaIC1bi.